Reading from the N-terminus, the 337-residue chain is Nucleoid-associated protein PBPRA2585 (337 aa).

This sequence belongs to the YejK family.

It is found in the cytoplasm. It localises to the nucleoid. The sequence is that of Nucleoid-associated protein PBPRA2585 from Photobacterium profundum (strain SS9).